The sequence spans 95 residues: Aspartyl/glutamyl-tRNA(Asn/Gln) amidotransferase subunit C (95 aa).

This sequence belongs to the GatC family. As to quaternary structure, heterotrimer of A, B and C subunits.

It carries out the reaction L-glutamyl-tRNA(Gln) + L-glutamine + ATP + H2O = L-glutaminyl-tRNA(Gln) + L-glutamate + ADP + phosphate + H(+). The catalysed reaction is L-aspartyl-tRNA(Asn) + L-glutamine + ATP + H2O = L-asparaginyl-tRNA(Asn) + L-glutamate + ADP + phosphate + 2 H(+). Its function is as follows. Allows the formation of correctly charged Asn-tRNA(Asn) or Gln-tRNA(Gln) through the transamidation of misacylated Asp-tRNA(Asn) or Glu-tRNA(Gln) in organisms which lack either or both of asparaginyl-tRNA or glutaminyl-tRNA synthetases. The reaction takes place in the presence of glutamine and ATP through an activated phospho-Asp-tRNA(Asn) or phospho-Glu-tRNA(Gln). The sequence is that of Aspartyl/glutamyl-tRNA(Asn/Gln) amidotransferase subunit C from Nitrosospira multiformis (strain ATCC 25196 / NCIMB 11849 / C 71).